Reading from the N-terminus, the 156-residue chain is RNA polymerase sigma factor SigS (156 aa).

A Polymerase core binding motif is present at residues 29–44 (EYYQLLLIKMWQLSQI). Positions 126–145 (QFEIAEIMSLSLSTIKLIKT) form a DNA-binding region, H-T-H motif.

This sequence belongs to the sigma-70 factor family.

Its function is as follows. Sigma factors are initiation factors that promote the attachment of RNA polymerase to specific initiation sites and are then released. Sigma-S contributes to the protection against external stress, thus playing a role in cellular fitness and survival. The protein is RNA polymerase sigma factor SigS (sigS) of Staphylococcus aureus (strain bovine RF122 / ET3-1).